We begin with the raw amino-acid sequence, 156 residues long: Small ribosomal subunit protein uS7 (156 aa).

This sequence belongs to the universal ribosomal protein uS7 family. Part of the 30S ribosomal subunit. Contacts proteins S9 and S11.

Its function is as follows. One of the primary rRNA binding proteins, it binds directly to 16S rRNA where it nucleates assembly of the head domain of the 30S subunit. Is located at the subunit interface close to the decoding center, probably blocks exit of the E-site tRNA. This chain is Small ribosomal subunit protein uS7, found in Jannaschia sp. (strain CCS1).